The primary structure comprises 298 residues: Probable tRNA(His) guanylyltransferase (298 aa).

Positions 58, 59, and 105 each coordinate Mg(2+). Residues 58-63 (DGRNFH) and 104-105 (SD) each bind GTP.

This sequence belongs to the tRNA(His) guanylyltransferase family. Homotetramer. Interacts with MFN1 and MFN2; functions as a guanyl-nucleotide exchange factor/GEF for MFN2 and also probably MFN1. Requires Mg(2+) as cofactor. As to expression, expressed in many tissues.

Its subcellular location is the cytoplasm. It localises to the mitochondrion outer membrane. The enzyme catalyses a 5'-end ribonucleotide-tRNA(His) + GTP + ATP + H2O = a 5'-end phospho-guanosine-ribonucleotide-tRNA(His) + AMP + 2 diphosphate + H(+). In terms of biological role, adds a GMP to the 5'-end of tRNA(His) after transcription and RNase P cleavage. This step is essential for proper recognition of the tRNA and for the fidelity of protein synthesis. Also functions as a guanyl-nucleotide exchange factor/GEF for the MFN1 and MFN2 mitofusins thereby regulating mitochondrial fusion. By regulating both mitochondrial dynamics and bioenergetic function, it contributes to cell survival following oxidative stress. This Homo sapiens (Human) protein is Probable tRNA(His) guanylyltransferase (THG1L).